The following is a 346-amino-acid chain: MRSQDLHQRLADLGAKPLHCGRIVRAWLQGRALDACTARQPAEDFLPLGVRHGLPQVAAELEGIARLHSEHPASDGSSRLLVELADRQMVESVLLPRGGLCVSTQVGCAVGCVFCMTGRSGLLRQVGSLEMVAQVVLARRRRAVKKVVFMGMGEPAHNLDNVLEAIDLLGTDGGIGHKNLVFSTVGDPRVFERLPLQRVKPALALSLHSTRAELRRQLLPKAPPLSPEELVEAGEAYARRVDYPIQYQWTLLEGINDSLEEMDGILRLLKGRFAVMNLIPYNSMDGDAYRRPSGERIVELVRYLHSRGVLTKVRNSAGQDIDGGCGQLRARATQGTAERRIPARQA.

Residue Glu91 is the Proton acceptor of the active site. The Radical SAM core domain maps to 94–320 (LLPRGGLCVS…TKVRNSAGQD (227 aa)). A disulfide bond links Cys101 and Cys325. Residues Cys108, Cys112, and Cys115 each coordinate [4Fe-4S] cluster. Residues 153–154 (GE), Ser183, 206–208 (SLH), and Asn282 each bind S-adenosyl-L-methionine. The active-site S-methylcysteine intermediate is Cys325.

It belongs to the radical SAM superfamily. RlmN family. The cofactor is [4Fe-4S] cluster.

Its subcellular location is the cytoplasm. The protein is Probable RNA methyltransferase PA14_40730 of Pseudomonas aeruginosa (strain UCBPP-PA14).